The sequence spans 335 residues: Zinc-type alcohol dehydrogenase-like protein SAS2087 (335 aa).

This sequence belongs to the zinc-containing alcohol dehydrogenase family. Quinone oxidoreductase subfamily.

The chain is Zinc-type alcohol dehydrogenase-like protein SAS2087 from Staphylococcus aureus (strain MSSA476).